The following is a 1017-amino-acid chain: MDQDTKTIIQYPTSGDEYDIPFDYLSRKFVRVSLVSDTQRILLDNITDYRYVSRTRVKLLVSTDGYSRVEIRRFTSASEMVVDFSDGSVLRATDLNVSALQSAHIAEEARDLFSTSLSIGQLSYFDAKGLQIKNVAAGVDNTDAVTVQQLNKIIADVVTTIPDSVADNIRGLWARVLGDIGITLVDGSFETGATITTRTQALWSISGRKCYTWAGALPKVVPENSTPESTGGISETAWVDSSSKALGVLLAGPSGAERVGLKQGGTVQDAINWLTFDSFDIVKDGSKDVTADIMAACVVANDLGLDIKQNDGTYLVSGNPVWPVYNSLDLNGVTLKLAAGFTGYFALTQKDSTTVYGPTSPIVQAINAAGGRTAGSGVLEGLVNSTELDGKFLFMEGADVLYYSRGTAKYWWTNTYLSNRGKLSDNLKYGVSAITKITAVTPRTKIVYYRLPNLDFGNGPANNGVIRVLNNTRFIMQGGSISNRPLKDVSKSPVIISLNYCAAFKAYDFFDPYPAFAVDSNNSLIYSYTLNFNDIADAVFENFNSQGYGWGVVGGQRSTNITYRDCNLNRVDMHDPYMGYLKVLDTRLGTWGINASGMGDMYLERVTVDLDDSAHGGYREHEGIINARGDFGGFHDGGLYIKDLTIVGEASAFEAASGHPVALVSAYSFNASLASIPESSPVTPWGFKEVIVEGLHCPFKRTGRRFNSIISAPSIQFTVYHPMRVKLEDCNFNSTAFEKFDLRGWRVTPYNPSKVGIANTLAFRPTNFVDVKDCSMVGLEFTRPTRAYDYSNFDVNLVNVKNVEEHSLSPFTLYTNQCGRYNLVGCGLQQIVDKSMTSGERANRRSTFSVTGGTWNSLSGNPTDITYGNGYDIPVVATGVMFVGPYSQTEVTGANLNVAEFVQASGCKFLSSGPTYIQPLLWSGAGGPTGASANFNVARGNTLGLNISAVNGETSQVIAATLVIPQGFSTGPAAGTTYGFTVEKNINYQLGLNARSLKANVGLVRCSDTITGVYLNA.

In terms of assembly, homotrimer.

The protein localises to the virion. Functionally, functions as a receptor binding protein (RBP) and probably mediates the attachment to the host capsular exopolysaccharides. Displays a depolymerase activity that specifically degrades the KL64-type polysaccharides of Klebsiella pneumoniae capsule, which allows the phage to reach the host cell membrane and bind the entry receptor. This chain is Depolymerase, capsule KL64-specific, found in Klebsiella phage P510 (Bacteriophage P510).